The following is a 1013-amino-acid chain: Putative DNA polymerase 060R (1013 aa).

Belongs to the DNA polymerase type-B family.

It catalyses the reaction DNA(n) + a 2'-deoxyribonucleoside 5'-triphosphate = DNA(n+1) + diphosphate. DNA-directed DNA polymerase involved in viral DNA replication. The protein is Putative DNA polymerase 060R of Dryophytes versicolor (chameleon treefrog).